The chain runs to 173 residues: Shikimate kinase 1 (173 aa).

14 to 19 (GAGKST) contributes to the ATP binding site. Position 18 (serine 18) interacts with Mg(2+). Positions 36, 60, and 82 each coordinate substrate. Residue arginine 120 participates in ATP binding. Arginine 140 lines the substrate pocket. Glutamine 157 provides a ligand contact to ATP.

It belongs to the shikimate kinase family. Monomer. Mg(2+) serves as cofactor.

It localises to the cytoplasm. It catalyses the reaction shikimate + ATP = 3-phosphoshikimate + ADP + H(+). Its pathway is metabolic intermediate biosynthesis; chorismate biosynthesis; chorismate from D-erythrose 4-phosphate and phosphoenolpyruvate: step 5/7. In terms of biological role, catalyzes the specific phosphorylation of the 3-hydroxyl group of shikimic acid using ATP as a cosubstrate. The chain is Shikimate kinase 1 from Serratia proteamaculans (strain 568).